The primary structure comprises 234 residues: Probable transcriptional regulatory protein TcrX (234 aa).

The 115-residue stretch at 10 to 124 (TVLVVDDEPV…EVVLRLRALL (115 aa)) folds into the Response regulatory domain. The residue at position 59 (Asp59) is a 4-aspartylphosphate. The segment at residues 135–232 (GAQLVVGDLV…LRGAGYVLKP (98 aa)) is a DNA-binding region (ompR/PhoB-type).

Post-translationally, phosphorylated by TcrY.

It is found in the cytoplasm. Functionally, member of the two-component regulatory system TcrY/TcrX. The sequence is that of Probable transcriptional regulatory protein TcrX (tcrX) from Mycobacterium tuberculosis (strain ATCC 25618 / H37Rv).